The chain runs to 123 residues: uncharacterized protein (123 aa).

2 disordered regions span residues 1–33 and 82–123; these read MAPPGGKINRPRTELKKKLFKRRRVLSRDRRRK and EKAA…EDKS. A compositionally biased stretch (basic residues) spans 18 to 33; sequence KLFKRRRVLSRDRRRK.

This is an uncharacterized protein from Mus musculus (Mouse).